Here is a 108-residue protein sequence, read N- to C-terminus: Precursor of CEP16 (108 aa).

Residues 1–27 (MVMAKNLTKFYVVFLVVLMMVVSLLLA) form the signal peptide. A propeptide spanning residues 28–92 (IEGRPVKDSS…VGHHRAKGYK (65 aa)) is cleaved from the precursor. N-linked (GlcNAc...) asparagine glycosylation is found at Asn50 and Asn98. The disordered stretch occupies residues 76–108 (QSGPSPGVGHHRAKGYKMFGRANDSGPSPGVGH). A hydroxyproline mark is found at Pro102 and Pro104.

It belongs to the C-terminally encoded plant signaling peptide (CEP) family. As to quaternary structure, interacts with CEP receptors (e.g. CEPR1 and CEPR2). Post-translationally, the mature small signaling peptide is generated by proteolytic processing of the longer precursor.

Its subcellular location is the secreted. The protein localises to the extracellular space. It localises to the apoplast. In terms of biological role, extracellular signaling peptide that may regulate primary root growth rate and systemic nitrogen (N)-demand signaling. The protein is Precursor of CEP16 of Arabidopsis thaliana (Mouse-ear cress).